Consider the following 466-residue polypeptide: tRNA-2-methylthio-N(6)-dimethylallyladenosine synthase (466 aa).

The region spanning 21-137 is the MTTase N-terminal domain; that stretch reads GSYWITTFGC…LEDLLNQVDN (117 aa). [4Fe-4S] cluster contacts are provided by Cys30, Cys66, Cys100, Cys172, Cys176, and Cys179. The region spanning 158–395 is the Radical SAM core domain; it reads RDSNICAWVN…NLLVEQTAKD (238 aa). Positions 398–466 constitute a TRAM domain; the sequence is TRYHNQIVEV…AFSLTGSPIQ (69 aa).

This sequence belongs to the methylthiotransferase family. MiaB subfamily. As to quaternary structure, monomer. Requires [4Fe-4S] cluster as cofactor.

The protein localises to the cytoplasm. It catalyses the reaction N(6)-dimethylallyladenosine(37) in tRNA + (sulfur carrier)-SH + AH2 + 2 S-adenosyl-L-methionine = 2-methylsulfanyl-N(6)-dimethylallyladenosine(37) in tRNA + (sulfur carrier)-H + 5'-deoxyadenosine + L-methionine + A + S-adenosyl-L-homocysteine + 2 H(+). In terms of biological role, catalyzes the methylthiolation of N6-(dimethylallyl)adenosine (i(6)A), leading to the formation of 2-methylthio-N6-(dimethylallyl)adenosine (ms(2)i(6)A) at position 37 in tRNAs that read codons beginning with uridine. The protein is tRNA-2-methylthio-N(6)-dimethylallyladenosine synthase of Prochlorococcus marinus (strain SARG / CCMP1375 / SS120).